The chain runs to 115 residues: Large ribosomal subunit protein bL19 (115 aa).

Belongs to the bacterial ribosomal protein bL19 family.

Functionally, this protein is located at the 30S-50S ribosomal subunit interface and may play a role in the structure and function of the aminoacyl-tRNA binding site. This chain is Large ribosomal subunit protein bL19, found in Buchnera aphidicola subsp. Schizaphis graminum (strain Sg).